A 200-amino-acid chain; its full sequence is GMP synthase [glutamine-hydrolyzing] subunit A (200 aa).

One can recognise a Glutamine amidotransferase type-1 domain in the interval 3 to 193 (KIYVVDNGGQ…IGICASYREI (191 aa)). Cysteine 80 (nucleophile) is an active-site residue. Catalysis depends on residues histidine 167 and glutamate 169.

In terms of assembly, heterodimer composed of a glutamine amidotransferase subunit (A) and a GMP-binding subunit (B).

It carries out the reaction XMP + L-glutamine + ATP + H2O = GMP + L-glutamate + AMP + diphosphate + 2 H(+). Its pathway is purine metabolism; GMP biosynthesis; GMP from XMP (L-Gln route): step 1/1. Functionally, catalyzes the synthesis of GMP from XMP. The chain is GMP synthase [glutamine-hydrolyzing] subunit A from Thermoplasma acidophilum (strain ATCC 25905 / DSM 1728 / JCM 9062 / NBRC 15155 / AMRC-C165).